We begin with the raw amino-acid sequence, 96 residues long: Phosphoribosyl-ATP pyrophosphatase (96 aa).

This sequence belongs to the PRA-PH family.

Its subcellular location is the cytoplasm. It carries out the reaction 1-(5-phospho-beta-D-ribosyl)-ATP + H2O = 1-(5-phospho-beta-D-ribosyl)-5'-AMP + diphosphate + H(+). It participates in amino-acid biosynthesis; L-histidine biosynthesis; L-histidine from 5-phospho-alpha-D-ribose 1-diphosphate: step 2/9. This chain is Phosphoribosyl-ATP pyrophosphatase, found in Methanococcus maripaludis (strain C5 / ATCC BAA-1333).